The primary structure comprises 251 residues: MDGYSSKKPRSASPSRSSLTEVEEEERDTLLKTVSLEEEDKSGENGPRKLRRSRFLYAIGILMLSNIAFIAAFLTVFVQKRALEPARLPPWAPPERYESRVFKYMDVYGGEPGPKSEEAWTNLIPKGKGWIKVHNETAIPDMPGLDQSLPEQSALVSVFHQLHCLYMTRAGYFAARSGNLDEVNVVHVSHCWDYLRQAIMCHSDTTLEWLHAPPDNFGSTGWGYEHQCRDYEAIFAFATEHRAGERQVIHG.

The disordered stretch occupies residues 1–47; that stretch reads MDGYSSKKPRSASPSRSSLTEVEEEERDTLLKTVSLEEEDKSGENGP. A helical membrane pass occupies residues 58 to 78; it reads AIGILMLSNIAFIAAFLTVFV. N-linked (GlcNAc...) asparagine glycosylation occurs at N135. 2 consecutive short sequence motifs (HXXHC) follow at residues 160 to 164 and 187 to 191; these read HQLHC and HVSHC.

Belongs to the ustYa family.

The protein localises to the membrane. It functions in the pathway mycotoxin biosynthesis. UstYa family oxidase; part of the gene cluster that mediates the biosynthesis of the phomopsins, a group of hexapeptide mycotoxins which infects lupins and causes lupinosis disease in livestock. Within the pathway, phomYb is probably involved in the construction of the macrocyclic structure of the phomopsins. The pathway starts with the processing of the precursor phomA by several endopeptidases including kexin proteases as well as the cluster-specific S41 family peptidase phomP1 and the oligopeptidase phomG to produce 10 identical copies of the hexapeptide Tyr-Val-Ile-Pro-Ile-Asp. After being excised from the precursor peptide, the core peptides are cyclized and modified post-translationally by enzymes encoded within the gene cluster. The timing and order of proteolysis of the phomA precursor and PTMs are still unknown. Two tyrosinase-like enzymes, phomQ1 and phomQ2, catalyze the chlorination and hydroxylation of Tyr, respectively. PhomYb, is proposed to be involved in the construction of the macrocyclic structure. The other 4 ustYa family proteins may be involved in PTMs that generate the unique structure of phomopsin A. PhomYa is required for the hydroxylation of C-beta of Tyr. PhomYc, phomYd, and phomYe are responsible for the biosynthesis of 2,3-dehydroisoleucine (dIle), 2,3-dehydroaspartic acid (dAsp), and 3,4-dehydroproline (dPro), respectively. While dIle formation by phomYc is indispensable for the installation of dAsp by phomYd, the order of the other PTMs have not been elucidated yet. Most of the biosynthetic enzymes likely have broad substrate specificity, and thus, there might be a metabolic grid from a precursor to phomopsin A. The enzyme(s) responsible for the biosynthesis of 3,4-dehydrovaline (dVal) have also not been identified yet. Finally, phomM acts as an S-adenosylmethionine-dependent alpha-N-methyltransferase that catalyzes two successive N-methylation reactions, converting N-desmethyl-phomopsin A to phomopsin A and phomopsin A further to an N,N-dimethylated congener called phomopsin E. The protein is UstYa family oxidase phomYb of Diaporthe leptostromiformis (Lupinosis disease fungus).